The primary structure comprises 361 residues: Velvet complex subunit B (361 aa).

2 disordered regions span residues 1-44 (MYAI…GIPS) and 139-161 (SIST…TYAQ). Residues 10 to 26 (PPPPPPLSMDRIPPPSS) show a composition bias toward pro residues. Residues 54 to 340 (VHEGRIWSLQ…ALQGIKIPIR (287 aa)) form the Velvet domain.

The protein belongs to the velvet family. VelB subfamily. In terms of assembly, component of the heterotrimeric velvet complex composed of laeA, veA and velB; VeA acting as a bridging protein between laeA and velB. Forms a heterodimeric complex with vosA; the formation of the velB-vosA complex is light-dependent.

It localises to the nucleus. The protein resides in the cytoplasm. In terms of biological role, component of the velvet transcription factor complex that controls sexual/asexual developmental ratio in response to light, promoting sexual development in the darkness while stimulating asexual sporulation under illumination. The velvet complex acts as a global regulator for secondary metabolite gene expression. Component of the velB-VosA heterodimeric complex that plays a dual role in activating genes associated with spore maturation and repressing certain development-associated genes. The velB-VosA complex binds DNA through the DNA-binding domain of vosA that recognizes an 11-nucleotide consensus sequence 5'-CTGGCCGCGGC-3' consisting of two motifs in the promoters of key developmental regulatory genes. Controls the expression of the aflatoxin gene cluster. Likely coordinates with fluG to modulate sclerotial production. The sequence is that of Velvet complex subunit B from Aspergillus flavus (strain ATCC 200026 / FGSC A1120 / IAM 13836 / NRRL 3357 / JCM 12722 / SRRC 167).